A 214-amino-acid chain; its full sequence is Transmembrane emp24 domain-containing protein p24delta10 (214 aa).

Positions 1-24 (MFLQSQKLWTMLLILAIWSPISHS) are cleaved as a signal peptide. Residues 25-181 (LHFDLHSGRT…QDLNRSTNTK (157 aa)) lie on the Lumenal side of the membrane. The GOLD domain occupies 34-149 (TKCIAEDIKS…VEVMEFEVKS (116 aa)). Residues 164–177 (LRDREEEMQDLNRS) adopt a coiled-coil conformation. Residue Arg167 is modified to Omega-N-methylated arginine. A glycan (N-linked (GlcNAc...) asparagine) is linked at Asn175. Residues 182-202 (MAWLSVLSFFVCIGVAGMQFL) form a helical membrane-spanning segment. The Cytoplasmic portion of the chain corresponds to 203–214 (HLKTFFEKKKVI). The COPII vesicle coat-binding motif lies at 207–208 (FF). Positions 207 to 214 (FFEKKKVI) match the COPI vesicle coat-binding motif.

Belongs to the EMP24/GP25L family. In terms of assembly, probably oligomerizes with other members of the EMP24/GP25L family. Associates with the COPI vesicle coat (coatomer). Associates with the COPII vesicle coat (coatomer).

It is found in the endoplasmic reticulum membrane. It localises to the golgi apparatus. The protein resides in the cis-Golgi network membrane. Its subcellular location is the golgi stack membrane. Its function is as follows. Involved in vesicular protein trafficking. Mainly functions in the early secretory pathway. Thought to act as cargo receptor at the lumenal side for incorporation of secretory cargo molecules into transport vesicles and to be involved in vesicle coat formation at the cytoplasmic side. This chain is Transmembrane emp24 domain-containing protein p24delta10, found in Arabidopsis thaliana (Mouse-ear cress).